The following is a 346-amino-acid chain: Biotin synthase (346 aa).

In terms of domain architecture, Radical SAM core spans 38-256 (QQVQVSTLLS…IAVARIMMPT (219 aa)). [4Fe-4S] cluster is bound by residues cysteine 53, cysteine 57, and cysteine 60. Residues cysteine 97, cysteine 128, cysteine 188, and arginine 260 each coordinate [2Fe-2S] cluster.

This sequence belongs to the radical SAM superfamily. Biotin synthase family. As to quaternary structure, homodimer. Requires [4Fe-4S] cluster as cofactor. It depends on [2Fe-2S] cluster as a cofactor.

The enzyme catalyses (4R,5S)-dethiobiotin + (sulfur carrier)-SH + 2 reduced [2Fe-2S]-[ferredoxin] + 2 S-adenosyl-L-methionine = (sulfur carrier)-H + biotin + 2 5'-deoxyadenosine + 2 L-methionine + 2 oxidized [2Fe-2S]-[ferredoxin]. It functions in the pathway cofactor biosynthesis; biotin biosynthesis; biotin from 7,8-diaminononanoate: step 2/2. Its function is as follows. Catalyzes the conversion of dethiobiotin (DTB) to biotin by the insertion of a sulfur atom into dethiobiotin via a radical-based mechanism. The polypeptide is Biotin synthase (Salmonella agona (strain SL483)).